The following is a 346-amino-acid chain: MTEQRIIASSSTREDDAADASIRPKRLADYLGQQPVREQMEIYIQAAKARGEAMDHVLIFGPPGLGKTTLSHVIANELGVSLRVTSGPVIEKAGDLAALLTNLQPHDVLFIDEIHRLSPVVEEVLYPAMEDFQIDIMIGDGPAARSIKIDLPPFTLIGATTRAGLLTAPLRDRFGIVQRLEFYSPQELTRIVIRSAAILGIDCTAEGAAEIARRARGTPRIANRLLRRVRDYAQVKAAGHIDLPVAQAAMQMLKVDPEGFDELDRRMLRTIVEHFDGGPVGVESLAASLSEERGTLEDVIEPYLIQQGFLIRTARGRMVTPKAYLHLGLKPPRERAPGIGEPGDLF.

The segment at 1–183 (MTEQRIIASS…FGIVQRLEFY (183 aa)) is large ATPase domain (RuvB-L). Residues isoleucine 22, arginine 23, glycine 64, lysine 67, threonine 68, threonine 69, 130–132 (EDF), arginine 173, tyrosine 183, and arginine 220 each bind ATP. Threonine 68 is a binding site for Mg(2+). Positions 184–254 (SPQELTRIVI…VAQAAMQMLK (71 aa)) are small ATPAse domain (RuvB-S). Residues 257–346 (PEGFDELDRR…PGIGEPGDLF (90 aa)) are head domain (RuvB-H). Arginine 293, arginine 312, and arginine 317 together coordinate DNA.

This sequence belongs to the RuvB family. In terms of assembly, homohexamer. Forms an RuvA(8)-RuvB(12)-Holliday junction (HJ) complex. HJ DNA is sandwiched between 2 RuvA tetramers; dsDNA enters through RuvA and exits via RuvB. An RuvB hexamer assembles on each DNA strand where it exits the tetramer. Each RuvB hexamer is contacted by two RuvA subunits (via domain III) on 2 adjacent RuvB subunits; this complex drives branch migration. In the full resolvosome a probable DNA-RuvA(4)-RuvB(12)-RuvC(2) complex forms which resolves the HJ.

It localises to the cytoplasm. It catalyses the reaction ATP + H2O = ADP + phosphate + H(+). Functionally, the RuvA-RuvB-RuvC complex processes Holliday junction (HJ) DNA during genetic recombination and DNA repair, while the RuvA-RuvB complex plays an important role in the rescue of blocked DNA replication forks via replication fork reversal (RFR). RuvA specifically binds to HJ cruciform DNA, conferring on it an open structure. The RuvB hexamer acts as an ATP-dependent pump, pulling dsDNA into and through the RuvAB complex. RuvB forms 2 homohexamers on either side of HJ DNA bound by 1 or 2 RuvA tetramers; 4 subunits per hexamer contact DNA at a time. Coordinated motions by a converter formed by DNA-disengaged RuvB subunits stimulates ATP hydrolysis and nucleotide exchange. Immobilization of the converter enables RuvB to convert the ATP-contained energy into a lever motion, pulling 2 nucleotides of DNA out of the RuvA tetramer per ATP hydrolyzed, thus driving DNA branch migration. The RuvB motors rotate together with the DNA substrate, which together with the progressing nucleotide cycle form the mechanistic basis for DNA recombination by continuous HJ branch migration. Branch migration allows RuvC to scan DNA until it finds its consensus sequence, where it cleaves and resolves cruciform DNA. This Xanthomonas axonopodis pv. citri (strain 306) protein is Holliday junction branch migration complex subunit RuvB.